Consider the following 963-residue polypeptide: Putative RNA Helicase B962L (963 aa).

A Helicase ATP-binding domain is found at 43 to 229 (IPTSLADRVL…FGIGKENIIL (187 aa)). 56–63 (SRTGSGKS) provides a ligand contact to ATP. The short motif at 167–170 (DEAH) is the DEAH box element. One can recognise a Helicase C-terminal domain in the interval 253–459 (ACETALTIHK…TIKKNKEGVF (207 aa)). The chain crosses the membrane as a helical span at residues 521–541 (GYFWQAAISDIATILAVVSVV).

It belongs to the DEAD box helicase family. DEAH subfamily.

Its subcellular location is the host membrane. The protein localises to the virion. It catalyses the reaction ATP + H2O = ADP + phosphate + H(+). In Ornithodoros (relapsing fever ticks), this protein is Putative RNA Helicase B962L.